The following is a 557-amino-acid chain: 2-succinyl-5-enolpyruvyl-6-hydroxy-3-cyclohexene-1-carboxylate synthase (557 aa).

Belongs to the TPP enzyme family. MenD subfamily. In terms of assembly, homodimer. Mg(2+) is required as a cofactor. The cofactor is Mn(2+). Thiamine diphosphate serves as cofactor.

The catalysed reaction is isochorismate + 2-oxoglutarate + H(+) = 5-enolpyruvoyl-6-hydroxy-2-succinyl-cyclohex-3-ene-1-carboxylate + CO2. It functions in the pathway quinol/quinone metabolism; 1,4-dihydroxy-2-naphthoate biosynthesis; 1,4-dihydroxy-2-naphthoate from chorismate: step 2/7. The protein operates within quinol/quinone metabolism; menaquinone biosynthesis. Catalyzes the thiamine diphosphate-dependent decarboxylation of 2-oxoglutarate and the subsequent addition of the resulting succinic semialdehyde-thiamine pyrophosphate anion to isochorismate to yield 2-succinyl-5-enolpyruvyl-6-hydroxy-3-cyclohexene-1-carboxylate (SEPHCHC). This chain is 2-succinyl-5-enolpyruvyl-6-hydroxy-3-cyclohexene-1-carboxylate synthase, found in Staphylococcus aureus (strain MSSA476).